The following is a 576-amino-acid chain: N-acetylmuramoyl-L-alanine amidase (576 aa).

Residues 1 to 21 (MAQGVLWILLGLLLWSDPGTA) form the signal peptide. Asparagine 77 is a glycosylation site (N-linked (GlcNAc...) asparagine). Residue serine 239 is modified to Phosphoserine. Deamidated asparagine occurs at positions 274 and 322. N-linked (GlcNAc...) asparagine glycosylation is present at asparagine 367. An N-acetylmuramoyl-L-alanine amidase domain is found at 406–532 (FLYVHHTYVP…RQLVRTDCPG (127 aa)). Histidine 410 is a Zn(2+) binding site. Cysteines 419 and 425 form a disulfide. Asparagine 485 carries N-linked (GlcNAc...) asparagine glycosylation. 2 residues coordinate Zn(2+): histidine 522 and cysteine 530. The disordered stretch occupies residues 550-576 (KPRPARSVSKRSRREPPPRTLPATDLQ).

This sequence belongs to the N-acetylmuramoyl-L-alanine amidase 2 family. It depends on Zn(2+) as a cofactor. Strongly expressed in liver and fetal liver, and secreted into serum. Expressed to a much lesser extent in transverse colon, lymph nodes, heart, thymus, pancreas, descending colon, stomach and testis. Isoform 2 is not detected in the liver or serum.

The protein resides in the secreted. It localises to the membrane. It catalyses the reaction Hydrolyzes the link between N-acetylmuramoyl residues and L-amino acid residues in certain cell-wall glycopeptides.. Its function is as follows. May play a scavenger role by digesting biologically active peptidoglycan (PGN) into biologically inactive fragments. Has no direct bacteriolytic activity. In Homo sapiens (Human), this protein is N-acetylmuramoyl-L-alanine amidase (PGLYRP2).